A 308-amino-acid polypeptide reads, in one-letter code: Oxygen-dependent coproporphyrinogen-III oxidase (308 aa).

Ser94 serves as a coordination point for substrate. A divalent metal cation-binding residues include His98 and His108. The active-site Proton donor is His108. Substrate is bound at residue 110–112 (NVR). A divalent metal cation contacts are provided by His147 and His177. Residues 242–277 (YVEFNLVWDRGTLFGLQTGGRTESILMSMPPLVRWE) form an important for dimerization region. 260–262 (GGR) lines the substrate pocket.

It belongs to the aerobic coproporphyrinogen-III oxidase family. In terms of assembly, homodimer. It depends on a divalent metal cation as a cofactor.

Its subcellular location is the cytoplasm. The enzyme catalyses coproporphyrinogen III + O2 + 2 H(+) = protoporphyrinogen IX + 2 CO2 + 2 H2O. It functions in the pathway porphyrin-containing compound metabolism; protoporphyrin-IX biosynthesis; protoporphyrinogen-IX from coproporphyrinogen-III (O2 route): step 1/1. Its function is as follows. Involved in the heme biosynthesis. Catalyzes the aerobic oxidative decarboxylation of propionate groups of rings A and B of coproporphyrinogen-III to yield the vinyl groups in protoporphyrinogen-IX. The sequence is that of Oxygen-dependent coproporphyrinogen-III oxidase from Yersinia enterocolitica serotype O:8 / biotype 1B (strain NCTC 13174 / 8081).